We begin with the raw amino-acid sequence, 250 residues long: Leucyl/phenylalanyl-tRNA--protein transferase (250 aa).

The tract at residues 1–21 (MTPFRRPTVLGTSASAPFPPA) is disordered.

The protein belongs to the L/F-transferase family.

It is found in the cytoplasm. The enzyme catalyses N-terminal L-lysyl-[protein] + L-leucyl-tRNA(Leu) = N-terminal L-leucyl-L-lysyl-[protein] + tRNA(Leu) + H(+). The catalysed reaction is N-terminal L-arginyl-[protein] + L-leucyl-tRNA(Leu) = N-terminal L-leucyl-L-arginyl-[protein] + tRNA(Leu) + H(+). It carries out the reaction L-phenylalanyl-tRNA(Phe) + an N-terminal L-alpha-aminoacyl-[protein] = an N-terminal L-phenylalanyl-L-alpha-aminoacyl-[protein] + tRNA(Phe). Functions in the N-end rule pathway of protein degradation where it conjugates Leu, Phe and, less efficiently, Met from aminoacyl-tRNAs to the N-termini of proteins containing an N-terminal arginine or lysine. This Xanthomonas euvesicatoria pv. vesicatoria (strain 85-10) (Xanthomonas campestris pv. vesicatoria) protein is Leucyl/phenylalanyl-tRNA--protein transferase.